Here is a 206-residue protein sequence, read N- to C-terminus: Ribosomal RNA small subunit methyltransferase G (206 aa).

Residues G73, L78, 124–125 (VE), and R139 contribute to the S-adenosyl-L-methionine site.

Belongs to the methyltransferase superfamily. RNA methyltransferase RsmG family.

It is found in the cytoplasm. It carries out the reaction guanosine(527) in 16S rRNA + S-adenosyl-L-methionine = N(7)-methylguanosine(527) in 16S rRNA + S-adenosyl-L-homocysteine. Functionally, specifically methylates the N7 position of guanine in position 527 of 16S rRNA. The chain is Ribosomal RNA small subunit methyltransferase G from Idiomarina loihiensis (strain ATCC BAA-735 / DSM 15497 / L2-TR).